The chain runs to 384 residues: Dual-specificity RNA methyltransferase RlmN (384 aa).

Residue glutamate 105 is the Proton acceptor of the active site. The region spanning 111–350 (EDDRATLCVS…TIVRKTRGDD (240 aa)) is the Radical SAM core domain. The cysteines at positions 118 and 355 are disulfide-linked. Cysteine 125, cysteine 129, and cysteine 132 together coordinate [4Fe-4S] cluster. S-adenosyl-L-methionine is bound by residues 179–180 (GE), serine 211, 233–235 (SLH), and asparagine 312. Cysteine 355 serves as the catalytic S-methylcysteine intermediate.

It belongs to the radical SAM superfamily. RlmN family. It depends on [4Fe-4S] cluster as a cofactor.

The protein localises to the cytoplasm. The catalysed reaction is adenosine(2503) in 23S rRNA + 2 reduced [2Fe-2S]-[ferredoxin] + 2 S-adenosyl-L-methionine = 2-methyladenosine(2503) in 23S rRNA + 5'-deoxyadenosine + L-methionine + 2 oxidized [2Fe-2S]-[ferredoxin] + S-adenosyl-L-homocysteine. It carries out the reaction adenosine(37) in tRNA + 2 reduced [2Fe-2S]-[ferredoxin] + 2 S-adenosyl-L-methionine = 2-methyladenosine(37) in tRNA + 5'-deoxyadenosine + L-methionine + 2 oxidized [2Fe-2S]-[ferredoxin] + S-adenosyl-L-homocysteine. Its function is as follows. Specifically methylates position 2 of adenine 2503 in 23S rRNA and position 2 of adenine 37 in tRNAs. m2A2503 modification seems to play a crucial role in the proofreading step occurring at the peptidyl transferase center and thus would serve to optimize ribosomal fidelity. This Shigella flexneri serotype 5b (strain 8401) protein is Dual-specificity RNA methyltransferase RlmN.